An 87-amino-acid chain; its full sequence is NADH dehydrogenase [ubiquinone] 1 alpha subcomplex subunit 4-like 2 (87 aa).

This sequence belongs to the complex I NDUFA4 subunit family.

This chain is NADH dehydrogenase [ubiquinone] 1 alpha subcomplex subunit 4-like 2 (NDUFA4L2), found in Homo sapiens (Human).